The primary structure comprises 116 residues: MAGIELERCQQQANEVTEIMRNNFGKVLERGVKLAELQQRSDQLLDMSSTFNKTTQNLAQKKCWENIRYRICVGLVVVGVLLIILIVLLVVFLPQSSDSSSAPRTQDAGIASGPGN.

The Cytoplasmic portion of the chain corresponds to 1–72 (MAGIELERCQ…CWENIRYRIC (72 aa)). The 61-residue stretch at 5–65 (ELERCQQQAN…QNLAQKKCWE (61 aa)) folds into the v-SNARE coiled-coil homology domain. Phosphoserine is present on residues Ser-41, Ser-48, and Ser-49. The chain crosses the membrane as a helical; Anchor for type IV membrane protein span at residues 73-93 (VGLVVVGVLLIILIVLLVVFL). At 94-116 (PQSSDSSSAPRTQDAGIASGPGN) the chain is on the vesicular side. The interval 96–116 (SSDSSSAPRTQDAGIASGPGN) is disordered.

The protein belongs to the synaptobrevin family. In terms of processing, (Microbial infection) Targeted and hydrolyzed by C.botulinum neurotoxin type X (BoNT/X) which hydrolyzes the 40-Arg-|-Ser-41 bond and probably inhibits neurotransmitter release. It remains unknown whether BoNT/X is ever produced, or what organisms it targets.

It is found in the cell membrane. Its subcellular location is the endomembrane system. It localises to the golgi apparatus. The protein resides in the trans-Golgi network membrane. May participate in trafficking events that are associated with myogenesis, such as myoblast fusion and/or GLUT4 trafficking. The chain is Vesicle-associated membrane protein 5 (VAMP5) from Homo sapiens (Human).